Here is a 78-residue protein sequence, read N- to C-terminus: Putative Fe(2+) transport protein A (78 aa).

It belongs to the FeoA family.

In terms of biological role, might be involved in Fe(2+) ion uptake. The protein is Putative Fe(2+) transport protein A of Helicobacter pylori (strain J99 / ATCC 700824) (Campylobacter pylori J99).